The chain runs to 374 residues: Alcohol dehydrogenase S chain (374 aa).

N-acetylserine is present on Ser2. The Zn(2+) site is built by Cys47, His68, Cys98, Cys101, Cys104, Cys112, and Cys174. NAD(+) is bound by residues 199 to 204 (GLGGVG), Asp223, Lys228, 292 to 294 (VGV), and Arg369.

The protein belongs to the zinc-containing alcohol dehydrogenase family. Class-I subfamily. Dimer of identical or non-identical chains of two types (E and S) coded by 2 separate genes at different loci. The cofactor is Zn(2+).

Its subcellular location is the cytoplasm. It catalyses the reaction a primary alcohol + NAD(+) = an aldehyde + NADH + H(+). It carries out the reaction a secondary alcohol + NAD(+) = a ketone + NADH + H(+). The chain is Alcohol dehydrogenase S chain from Equus caballus (Horse).